Here is a 174-residue protein sequence, read N- to C-terminus: Xanthine-guanine phosphoribosyltransferase (174 aa).

Residues 49–50 (RG) and 108–116 (DDLVDTGAT) each bind 5-phospho-alpha-D-ribose 1-diphosphate. Residue aspartate 109 coordinates Mg(2+). Positions 112 and 155 each coordinate guanine. Aspartate 112 and isoleucine 155 together coordinate xanthine. GMP-binding positions include 112–116 (DTGAT) and 154–155 (WI).

This sequence belongs to the purine/pyrimidine phosphoribosyltransferase family. XGPT subfamily. In terms of assembly, homotetramer. Mg(2+) is required as a cofactor.

The protein resides in the cell inner membrane. The catalysed reaction is GMP + diphosphate = guanine + 5-phospho-alpha-D-ribose 1-diphosphate. The enzyme catalyses XMP + diphosphate = xanthine + 5-phospho-alpha-D-ribose 1-diphosphate. It catalyses the reaction IMP + diphosphate = hypoxanthine + 5-phospho-alpha-D-ribose 1-diphosphate. It functions in the pathway purine metabolism; GMP biosynthesis via salvage pathway; GMP from guanine: step 1/1. It participates in purine metabolism; XMP biosynthesis via salvage pathway; XMP from xanthine: step 1/1. Functionally, purine salvage pathway enzyme that catalyzes the transfer of the ribosyl-5-phosphate group from 5-phospho-alpha-D-ribose 1-diphosphate (PRPP) to the N9 position of the 6-oxopurines guanine and xanthine to form the corresponding ribonucleotides GMP (guanosine 5'-monophosphate) and XMP (xanthosine 5'-monophosphate), with the release of PPi. To a lesser extent, also acts on hypoxanthine. The chain is Xanthine-guanine phosphoribosyltransferase from Rhodopseudomonas palustris (strain BisB18).